Reading from the N-terminus, the 293-residue chain is 33 kDa chaperonin (293 aa).

2 disulfide bridges follow: cysteine 238/cysteine 240 and cysteine 271/cysteine 274.

It belongs to the HSP33 family. Post-translationally, under oxidizing conditions two disulfide bonds are formed involving the reactive cysteines. Under reducing conditions zinc is bound to the reactive cysteines and the protein is inactive.

It is found in the cytoplasm. Functionally, redox regulated molecular chaperone. Protects both thermally unfolding and oxidatively damaged proteins from irreversible aggregation. Plays an important role in the bacterial defense system toward oxidative stress. The sequence is that of 33 kDa chaperonin from Staphylococcus epidermidis (strain ATCC 35984 / DSM 28319 / BCRC 17069 / CCUG 31568 / BM 3577 / RP62A).